The following is a 143-amino-acid chain: Turripeptide VIII-01 (143 aa).

A signal peptide spans 1–23 (MALSLDILMSVTMVTAVLTTVNA). A propeptide spanning residues 24 to 32 (EYKDSRLDS) is cleaved from the precursor.

Contains 4 disulfide bonds. Expressed by the venom duct.

It localises to the secreted. This chain is Turripeptide VIII-01, found in Gemmula speciosa (Splendid gem-turris).